Here is a 360-residue protein sequence, read N- to C-terminus: Phospho-N-acetylmuramoyl-pentapeptide-transferase (360 aa).

Helical transmembrane passes span 21–41 (YITF…LWIG), 73–93 (TMGG…WADL), 98–118 (IWFV…DDYW), 132–152 (WKYF…YAVG), 168–188 (VMPQ…VGTS), 199–219 (GLAI…AWAT), 236–256 (AGEL…FLWY), 263–283 (VFMG…IAVL), 288–308 (LLLV…ILQV), and 338–358 (VIVR…VTLK).

The protein belongs to the glycosyltransferase 4 family. MraY subfamily. Mg(2+) serves as cofactor.

The protein resides in the cell inner membrane. The catalysed reaction is UDP-N-acetyl-alpha-D-muramoyl-L-alanyl-gamma-D-glutamyl-meso-2,6-diaminopimeloyl-D-alanyl-D-alanine + di-trans,octa-cis-undecaprenyl phosphate = di-trans,octa-cis-undecaprenyl diphospho-N-acetyl-alpha-D-muramoyl-L-alanyl-D-glutamyl-meso-2,6-diaminopimeloyl-D-alanyl-D-alanine + UMP. It participates in cell wall biogenesis; peptidoglycan biosynthesis. Its function is as follows. Catalyzes the initial step of the lipid cycle reactions in the biosynthesis of the cell wall peptidoglycan: transfers peptidoglycan precursor phospho-MurNAc-pentapeptide from UDP-MurNAc-pentapeptide onto the lipid carrier undecaprenyl phosphate, yielding undecaprenyl-pyrophosphoryl-MurNAc-pentapeptide, known as lipid I. The protein is Phospho-N-acetylmuramoyl-pentapeptide-transferase of Actinobacillus pleuropneumoniae serotype 5b (strain L20).